The chain runs to 426 residues: Serine--tRNA ligase (426 aa).

L-serine is bound at residue 229 to 231; the sequence is TAE. ATP-binding positions include 260 to 262 and V276; that span reads RTE. E283 is a binding site for L-serine. 350-353 is an ATP binding site; that stretch reads EVTS. T386 lines the L-serine pocket.

This sequence belongs to the class-II aminoacyl-tRNA synthetase family. Type-1 seryl-tRNA synthetase subfamily. Homodimer. The tRNA molecule binds across the dimer.

The protein resides in the cytoplasm. It catalyses the reaction tRNA(Ser) + L-serine + ATP = L-seryl-tRNA(Ser) + AMP + diphosphate + H(+). It carries out the reaction tRNA(Sec) + L-serine + ATP = L-seryl-tRNA(Sec) + AMP + diphosphate + H(+). The protein operates within aminoacyl-tRNA biosynthesis; selenocysteinyl-tRNA(Sec) biosynthesis; L-seryl-tRNA(Sec) from L-serine and tRNA(Sec): step 1/1. Its function is as follows. Catalyzes the attachment of serine to tRNA(Ser). Is also able to aminoacylate tRNA(Sec) with serine, to form the misacylated tRNA L-seryl-tRNA(Sec), which will be further converted into selenocysteinyl-tRNA(Sec). The chain is Serine--tRNA ligase from Rhodopirellula baltica (strain DSM 10527 / NCIMB 13988 / SH1).